Here is a 347-residue protein sequence, read N- to C-terminus: MSVMFDPDTAIYPFPPKPTPLSIDEKAYYREKIKRLLKERNAVMVAHYYTDPEIQQLAEETGGCISDSLEMARFGAKHPASTLLVAGVRFMGETAKILSPEKTILMPTLQAECSLDLGCPVEEFNAFCDAHPDHTVVVYANTSAAVKARADWVVTSSIAVELIDHLDSLGEKIIWAPDKHLGRYVQKQTGADILCWQGACIVHDEFKTQALTRLQEEYLDAAILVHPESPQAIVDMADAVGSTSQLIAAAKTLPHQWLIVATDRGIFYKMQQAVPDKELLEAPTAGEGATCRSCAHCPWMAMNGLQAIAEALEQEGSNHEVHVDERLRERALVPLNRMLDFAATLRG.

Residues His47 and Ser68 each contribute to the iminosuccinate site. Cys113 is a [4Fe-4S] cluster binding site. Residues 139–141 and Ser156 each bind iminosuccinate; that span reads YAN. Cys200 lines the [4Fe-4S] cluster pocket. Residues 226–228 and Thr243 contribute to the iminosuccinate site; that span reads HPE. Position 297 (Cys297) interacts with [4Fe-4S] cluster.

Belongs to the quinolinate synthase family. Type 1 subfamily. Requires [4Fe-4S] cluster as cofactor.

It is found in the cytoplasm. The enzyme catalyses iminosuccinate + dihydroxyacetone phosphate = quinolinate + phosphate + 2 H2O + H(+). The protein operates within cofactor biosynthesis; NAD(+) biosynthesis; quinolinate from iminoaspartate: step 1/1. In terms of biological role, catalyzes the condensation of iminoaspartate with dihydroxyacetone phosphate to form quinolinate. In Shigella dysenteriae serotype 1 (strain Sd197), this protein is Quinolinate synthase.